The chain runs to 511 residues: DnaJ homolog 1, mitochondrial (511 aa).

The transit peptide at 1–55 (MAFQQGVLSRCSGVFRHHVGHSRHINNILYRHAIAFASIAPRIPKSSFHTSAIRN) directs the protein to the mitochondrion. Positions 59–127 (FKDPYDTLGL…RQQYDQFGPA (69 aa)) constitute a J domain. The CR-type zinc finger occupies 217–297 (SKNVQLRFSA…CHGEGVQVNR (81 aa)). CXXCXGXG motif repeat units lie at residues 230–237 (CSTCSGTG), 247–254 (CSTCHGTG), 269–276 (CPTCNGEG), and 285–292 (CTKCHGEG).

The protein localises to the mitochondrion. In terms of biological role, plays a role in mitochondrial biogenesis and protein folding. This Saccharomyces cerevisiae (strain ATCC 204508 / S288c) (Baker's yeast) protein is DnaJ homolog 1, mitochondrial (MDJ1).